The sequence spans 607 residues: Arginine--tRNA ligase (607 aa).

The 'HIGH' region signature appears at 147 to 157 (PNIAKEMHVGH).

This sequence belongs to the class-I aminoacyl-tRNA synthetase family. As to quaternary structure, monomer.

Its subcellular location is the cytoplasm. The catalysed reaction is tRNA(Arg) + L-arginine + ATP = L-arginyl-tRNA(Arg) + AMP + diphosphate. This Prochlorococcus marinus (strain NATL2A) protein is Arginine--tRNA ligase.